Consider the following 159-residue polypeptide: 6,7-dimethyl-8-ribityllumazine synthase (159 aa).

5-amino-6-(D-ribitylamino)uracil is bound by residues Trp-30, 64-66, and 88-90; these read TFE and CVI. (2S)-2-hydroxy-3-oxobutyl phosphate is bound at residue 93–94; sequence ET. His-96 functions as the Proton donor in the catalytic mechanism. Residue Phe-121 participates in 5-amino-6-(D-ribitylamino)uracil binding. Arg-135 contributes to the (2S)-2-hydroxy-3-oxobutyl phosphate binding site.

This sequence belongs to the DMRL synthase family.

The enzyme catalyses (2S)-2-hydroxy-3-oxobutyl phosphate + 5-amino-6-(D-ribitylamino)uracil = 6,7-dimethyl-8-(1-D-ribityl)lumazine + phosphate + 2 H2O + H(+). It participates in cofactor biosynthesis; riboflavin biosynthesis; riboflavin from 2-hydroxy-3-oxobutyl phosphate and 5-amino-6-(D-ribitylamino)uracil: step 1/2. Functionally, catalyzes the formation of 6,7-dimethyl-8-ribityllumazine by condensation of 5-amino-6-(D-ribitylamino)uracil with 3,4-dihydroxy-2-butanone 4-phosphate. This is the penultimate step in the biosynthesis of riboflavin. The polypeptide is 6,7-dimethyl-8-ribityllumazine synthase (Cytophaga hutchinsonii (strain ATCC 33406 / DSM 1761 / CIP 103989 / NBRC 15051 / NCIMB 9469 / D465)).